The following is a 471-amino-acid chain: Mitochondrial distribution and morphology protein 10 (471 aa).

Disordered stretches follow at residues 272–291 (TEMPSSSSSTSSTTTTSNHG), 374–394 (ADTPGVPPVEPPSTHNRDEEN), and 436–455 (SWAANSTAAGGGQSVGGGVS). Residues 276–288 (SSSSSTSSTTTTS) are compositionally biased toward low complexity. Residues 444–455 (AGGGQSVGGGVS) show a composition bias toward gly residues.

Belongs to the MDM10 family. Component of the ER-mitochondria encounter structure (ERMES) or MDM complex, composed of mmm1, mdm10, mdm12 and mdm34. Associates with the mitochondrial outer membrane sorting assembly machinery SAM(core) complex.

The protein localises to the mitochondrion outer membrane. Functionally, component of the ERMES/MDM complex, which serves as a molecular tether to connect the endoplasmic reticulum and mitochondria. Components of this complex are involved in the control of mitochondrial shape and protein biogenesis and may function in phospholipid exchange. mdm10 is involved in the late assembly steps of the general translocase of the mitochondrial outer membrane (TOM complex). Functions in the tom40-specific route of the assembly of outer membrane beta-barrel proteins, including the association of tom40 with the receptor tom22 and small TOM proteins. Can associate with the SAM(core) complex as well as the mdm12-mmm1 complex, both involved in late steps of the major beta-barrel assembly pathway, that is responsible for biogenesis of all outer membrane beta-barrel proteins. May act as a switch that shuttles between both complexes and channels precursor proteins into the tom40-specific pathway. Plays a role in mitochondrial morphology and in the inheritance of mitochondria. In Neosartorya fischeri (strain ATCC 1020 / DSM 3700 / CBS 544.65 / FGSC A1164 / JCM 1740 / NRRL 181 / WB 181) (Aspergillus fischerianus), this protein is Mitochondrial distribution and morphology protein 10 (mdmB).